Reading from the N-terminus, the 61-residue chain is MAKKALIAKANRKPKFRVRAYTRCSRCGRPRAVFRKFGLCRICFREMAHRGELPGVTKASW.

Zn(2+)-binding residues include C24, C27, C40, and C43.

Belongs to the universal ribosomal protein uS14 family. Zinc-binding uS14 subfamily. In terms of assembly, part of the 30S ribosomal subunit. Contacts proteins S3 and S10. Zn(2+) is required as a cofactor.

Functionally, binds 16S rRNA, required for the assembly of 30S particles and may also be responsible for determining the conformation of the 16S rRNA at the A site. The sequence is that of Small ribosomal subunit protein uS14 from Thermobifida fusca (strain YX).